The primary structure comprises 554 residues: Laccase-8 (554 aa).

Residues 1–21 form the signal peptide; the sequence is MASAAMLVPLVLVLCTAAASA. Plastocyanin-like domains follow at residues 29–145 and 156–309; these read KVGG…PRNG and EEIP…YKGV. Cu cation is bound by residues His-79 and His-81. Residues Asn-107 and Asn-113 are each glycosylated (N-linked (GlcNAc...) asparagine). The Cu cation site is built by His-124 and His-126. Residues Asn-271 and Asn-369 are each glycosylated (N-linked (GlcNAc...) asparagine). The Plastocyanin-like 3 domain maps to 411 to 537; it reads DFPDFPPPMQ…AMVFEVLNGP (127 aa). Positions 455, 458, 460, 516, 517, 518, and 522 each coordinate Cu cation.

This sequence belongs to the multicopper oxidase family. The cofactor is Cu cation.

It localises to the secreted. The protein localises to the extracellular space. The protein resides in the apoplast. It carries out the reaction 4 hydroquinone + O2 = 4 benzosemiquinone + 2 H2O. In terms of biological role, lignin degradation and detoxification of lignin-derived products. In Oryza sativa subsp. japonica (Rice), this protein is Laccase-8 (LAC8).